The primary structure comprises 385 residues: Prepilin peptidase EppA (385 aa).

10 consecutive transmembrane segments (helical) span residues methionine 1–alanine 21, glycine 29–alanine 49, tryptophan 58–tryptophan 78, methionine 80–phenylalanine 100, leucine 104–leucine 124, valine 126–isoleucine 146, threonine 166–aspartate 186, phenylalanine 187–isoleucine 207, phenylalanine 231–isoleucine 251, and proline 358–phenylalanine 378.

It belongs to the peptidase A24 family.

The protein localises to the cell membrane. Peptidase that processes the N-terminus of prepilins. The protein is Prepilin peptidase EppA of Methanothermobacter thermautotrophicus (strain ATCC 29096 / DSM 1053 / JCM 10044 / NBRC 100330 / Delta H) (Methanobacterium thermoautotrophicum).